Here is a 379-residue protein sequence, read N- to C-terminus: Salicylate/benzoate carboxyl methyltransferase (379 aa).

Y40 is a binding site for S-adenosyl-L-homocysteine. Q47 contacts salicylate. Residues C82, N87, D119, L120, S155, and F156 each contribute to the S-adenosyl-L-homocysteine site. Residues H176 and W177 each contribute to the salicylate site. Positions 188, 275, 277, and 278 each coordinate Mg(2+).

It belongs to the methyltransferase superfamily. Type-7 methyltransferase family. SABATH subfamily. In terms of assembly, homodimer. It depends on Mg(2+) as a cofactor. As to expression, expressed in flowers and at lower levels in leaves and stems. Hardly detected in roots and siliques. Expressed in the sepals and the leaf trichomes and hydathodes.

The catalysed reaction is benzoate + S-adenosyl-L-methionine = methyl benzoate + S-adenosyl-L-homocysteine. It catalyses the reaction salicylate + S-adenosyl-L-methionine = methyl salicylate + S-adenosyl-L-homocysteine. Its function is as follows. Methyltransferase involved in the biosynthesis of methylsalicylate in response to stresses. Utilizes salicylic acid (SA) more efficiently than benzoic acid (BA). Can also use anthranilic acid and m-hydroxybenzoic acid as substrate. In Arabidopsis thaliana (Mouse-ear cress), this protein is Salicylate/benzoate carboxyl methyltransferase (BSMT1).